The primary structure comprises 307 residues: Protoheme IX farnesyltransferase (307 aa).

The next 8 helical transmembrane spans lie at 32-52 (MGIVNSNTLTVFTGFWLALHF), 65-85 (FFTIVGSALIMAGVCCLNNYI), 108-128 (PGFALAFGLVILLLGFVFLLL), 131-151 (PMAVLISFIGAFTYVVLYTLW), 158-178 (LNTVVGSISGAVPPLIGWAAI), 186-206 (IAWMLFLIMFIWQIPHFLALA), 251-271 (LGITFMVIATLLNIGWIALGL), and 287-307 (FVYSLNYLTILFVSMIVVTFF).

The protein belongs to the UbiA prenyltransferase family. Protoheme IX farnesyltransferase subfamily. Interacts with CtaA.

The protein localises to the cell membrane. The enzyme catalyses heme b + (2E,6E)-farnesyl diphosphate + H2O = Fe(II)-heme o + diphosphate. The protein operates within porphyrin-containing compound metabolism; heme O biosynthesis; heme O from protoheme: step 1/1. Its function is as follows. Converts heme B (protoheme IX) to heme O by substitution of the vinyl group on carbon 2 of heme B porphyrin ring with a hydroxyethyl farnesyl side group. In Bacillus mycoides (strain KBAB4) (Bacillus weihenstephanensis), this protein is Protoheme IX farnesyltransferase.